We begin with the raw amino-acid sequence, 167 residues long: Single-stranded DNA-binding protein 2 (167 aa).

Positions 1 to 104 (MLNRVVLVGR…VVCDSVQFLE (104 aa)) constitute an SSB domain. Residues 107–167 (NAQQNGGQRQ…IDISDDDLPF (61 aa)) form a disordered region. Low complexity-rich tracts occupy residues 109–118 (QQNGGQRQQN) and 132–147 (SGQNNSYNNSSNTKQS). The Important for interaction with partner proteins signature appears at 162 to 167 (DDDLPF).

Homotetramer.

Its function is as follows. Plays an important role in DNA replication, recombination and repair. Binds to ssDNA and to an array of partner proteins to recruit them to their sites of action during DNA metabolism. This Staphylococcus aureus (strain MSSA476) protein is Single-stranded DNA-binding protein 2 (ssb2).